Consider the following 931-residue polypeptide: Aconitate hydratase A (931 aa).

A disordered region spans residues 402–454 (SASPVDEASAESFPASDAPAYGSQENGAGAPQHADGTGAAVPSNPVTVTAPDG). Positions 472, 538, and 541 each coordinate [4Fe-4S] cluster.

It belongs to the aconitase/IPM isomerase family. [4Fe-4S] cluster is required as a cofactor.

It carries out the reaction citrate = D-threo-isocitrate. The catalysed reaction is citrate = cis-aconitate + H2O. The enzyme catalyses cis-aconitate + H2O = D-threo-isocitrate. It participates in carbohydrate metabolism; tricarboxylic acid cycle; isocitrate from oxaloacetate: step 2/2. Functionally, catalyzes the reversible isomerization of citrate to isocitrate via cis-aconitate in the tricarboxylic acid (TCA) cycle. Aconitase activity is important for the initiation of morphological and physiological differentiation of S.viridochromogenes. In addition, the apo form of AcnA (lacking the [4Fe-4S] cluster) functions as a RNA-binding regulatory protein, which binds to iron responsive elements (IREs) located on the untranslated region of certain mRNAs, including recA and ftsZ. Binding to IRE-like structures probably alters the target mRNA stability and regulates the protein amount. The apo form plays a regulatory role in oxidative stress response. The sequence is that of Aconitate hydratase A from Streptomyces viridochromogenes (strain DSM 40736 / JCM 4977 / BCRC 1201 / Tue 494).